The following is an 860-amino-acid chain: Leucine--tRNA ligase (860 aa).

Positions 42 to 52 (PYPSGRLHMGH) match the 'HIGH' region motif. Residues 619–623 (KMSKS) carry the 'KMSKS' region motif. K622 serves as a coordination point for ATP.

This sequence belongs to the class-I aminoacyl-tRNA synthetase family.

The protein localises to the cytoplasm. The catalysed reaction is tRNA(Leu) + L-leucine + ATP = L-leucyl-tRNA(Leu) + AMP + diphosphate. This chain is Leucine--tRNA ligase, found in Escherichia coli O45:K1 (strain S88 / ExPEC).